A 910-amino-acid chain; its full sequence is DNA mismatch repair protein MutS (910 aa).

607 to 614 (GPNMAGKS) contacts ATP.

It belongs to the DNA mismatch repair MutS family.

This protein is involved in the repair of mismatches in DNA. It is possible that it carries out the mismatch recognition step. This protein has a weak ATPase activity. In Geobacillus thermodenitrificans (strain NG80-2), this protein is DNA mismatch repair protein MutS.